Consider the following 709-residue polypeptide: Disintegrin and metalloproteinase domain-containing protein 5 (709 aa).

Residues 1 to 98 constitute a propeptide that is removed on maturation; the sequence is MKTPISSILK…TLSGFIHVIY (98 aa). The Extracellular portion of the chain corresponds to 1 to 649; the sequence is MKTPISSILK…QQNRGIHPKQ (649 aa). The Peptidase M12B domain maps to 141–334; that stretch reads RYIKTDIVVD…QDLECLQDLP (194 aa). 7 disulfides stabilise this stretch: cysteine 247–cysteine 329, cysteine 289–cysteine 314, cysteine 291–cysteine 296, cysteine 406–cysteine 426, cysteine 585–cysteine 597, cysteine 591–cysteine 603, and cysteine 605–cysteine 614. In terms of domain architecture, Disintegrin spans 346-434; sequence RRICGNGILE…YCVPDTFARN (89 aa). Residues 581–615 form the EGF-like; calcium-binding domain; that stretch reads DFQQCNTSRDCNDHGVCNNFNHCHCDKGYNPPYCE. Residues 650 to 670 traverse the membrane as a helical segment; sequence QLQLILYITLPLIMIISAVFI. Residues 671–709 are Cytoplasmic-facing; sequence KQSKLSRLCGRERSEGTSCITEDSVSNTKMTTNEGSTLH. The tract at residues 690 to 709 is disordered; it reads ITEDSVSNTKMTTNEGSTLH.

Interacts with TEX101. As to expression, detected in testis.

Its subcellular location is the membrane. This is a non catalytic metalloprotease-like protein. May play a role in sperm-egg fusion. This chain is Disintegrin and metalloproteinase domain-containing protein 5 (Adam5), found in Rattus norvegicus (Rat).